The primary structure comprises 450 residues: Phosphoglucosamine mutase 2 (450 aa).

The Phosphoserine intermediate role is filled by serine 101. The Mg(2+) site is built by serine 101, aspartate 245, aspartate 247, and aspartate 249. Serine 101 bears the Phosphoserine mark.

The protein belongs to the phosphohexose mutase family. The cofactor is Mg(2+). In terms of processing, activated by phosphorylation.

It carries out the reaction alpha-D-glucosamine 1-phosphate = D-glucosamine 6-phosphate. In terms of biological role, catalyzes the conversion of glucosamine-6-phosphate to glucosamine-1-phosphate. The protein is Phosphoglucosamine mutase 2 of Shewanella sp. (strain MR-4).